The chain runs to 131 residues: Small ribosomal subunit protein uS8 (131 aa).

The protein belongs to the universal ribosomal protein uS8 family. In terms of assembly, part of the 30S ribosomal subunit. Contacts proteins S5 and S12.

Functionally, one of the primary rRNA binding proteins, it binds directly to 16S rRNA central domain where it helps coordinate assembly of the platform of the 30S subunit. This chain is Small ribosomal subunit protein uS8, found in Chlorobium limicola (strain DSM 245 / NBRC 103803 / 6330).